Reading from the N-terminus, the 181-residue chain is NADH-quinone oxidoreductase subunit B (181 aa).

Residues C45, C46, C111, and C140 each coordinate [4Fe-4S] cluster.

Belongs to the complex I 20 kDa subunit family. NDH-1 is composed of 14 different subunits. Subunits NuoB, C, D, E, F, and G constitute the peripheral sector of the complex. [4Fe-4S] cluster serves as cofactor.

The protein localises to the cell inner membrane. The enzyme catalyses a quinone + NADH + 5 H(+)(in) = a quinol + NAD(+) + 4 H(+)(out). Its function is as follows. NDH-1 shuttles electrons from NADH, via FMN and iron-sulfur (Fe-S) centers, to quinones in the respiratory chain. The immediate electron acceptor for the enzyme in this species is believed to be a menaquinone. Couples the redox reaction to proton translocation (for every two electrons transferred, four hydrogen ions are translocated across the cytoplasmic membrane), and thus conserves the redox energy in a proton gradient. The sequence is that of NADH-quinone oxidoreductase subunit B from Flavobacterium psychrophilum (strain ATCC 49511 / DSM 21280 / CIP 103535 / JIP02/86).